A 1526-amino-acid chain; its full sequence is MELSPLQPVNENMLLNKKKNEDGKKRLSVERIYQKKTQLEHILLRPDTYIGSVELVTQQMWVYDEDVGINYREVTFVPGLYKIFDEILVNAADNKQRDPKMSCIRVTMMRNNLISIWNNGKGIPVVEHKVEKMYVPALIFGQLLTSSNYDDDEKKVTGGRNGYGAKLCNIFSTKFTVETASREYKKMFKQTWMDNMGRAGDMELKPFSGEDYTCITFQPDLSKFKMQSLDKDIVALMVRRAYDIAGSTKDVKVFLNGNRLPVKGFRSYVDMYLKDKVDETGNALKVVHEQVNPRWEVCLTMSEKGFQQISFVNSIATSKGGRHVDYVADQIVSKLVDVVKKKNKGGVAVKADQVKNHMWIFGNAVIENPTFDSQTKENMTLQAKSFGSTCQLSEKFIKAAIGCGIVESILNWVKFKAQIQLNKKCSAVKHNRIKGIPKLDDANDAGSRNSAECTLILTEGDSAKTLAVSGLGVVGRDKYGVFPLRGKILNVREASHKQIMENAEINNIIKIVGLQYKKNYEDEDSLKTLRYGKIMIMTDQDQDGSHIKGLLINFIHHNWPSLLRHRFLEEFITPIVKVSKNKQEIAFYSLPEFEEWKSTNPNHKKWKVKYYKGLGTSTSKEAKEYFANMKRHRIQFKYSGPEDDAAISLAFSKKQVDDRKEWLTNFMEDRRQRKLLGLPEDYLYGQTTMYLTYNDFINKELILFSNSDNERSIPSMVDGLKPGQRKVLFTCFKRNDKREVKVAQLAGSVAEMSSYHHGEMSLMMTIINLAQNFVGSNNLNLLQPIGQFGTRLHGGKDSASPRYIFTMLSPLARLLFPSKDDHTLRFLYDDNQRVEPEWYIPIIPMVLINGAEGIGTGWSCKIPNFDVREVVNNIRRLLDGEEPLPMLPSYKNYKGTIEELASNQYVINGEVAILNSTTIEITELPIRTWTQTYKEQVLEPMLNGTEKTPPLITDYREYHTDTTVKFVIKMTEEKLAEAERVGLHKVFKLQTSLTCNSMVLFDHVGCLKKYDTVLDILRDFFELRLKYYGLRKEWLLGMLGAESSKLNNQARFILEKIDGKIVIENKPKKELIKVLIQRGYDSDPVKAWKEAQQKVPEEEENEENEESESESTSPAAESGPTFNYLLDMPLWYLTKEKKDELCKQRDEKEQELNTLKKKTPSDLWKEDLAAFVEELEVVEAKEKQDEQVGLPGKGVKAKGKKAQISEVLPSPVGKRVIPQVTMEMRAEAEKKIRRKIKSENVEGTPAEDGAEPGLRQRLEKRQKREPGTRAKKQTTLPFKPIKKAQKQNPWSDSESDMSSNESNFDVPPREKEPRIAATKAKFTADLDSDDDFSGLDEKDEDEDFFPLDDTPPKTKMPPKNTKKALKPQKSSTSVDLESDGKDSVPASPGASAADVPAETEPSKPSSKQTVGVKRTITKGQSLTSTAGTKKRAVPKETKSDSALNAHVSKKPAPAKAKNSRKRMPSSSDSSDSEFEKAISKGATSKKLKGEERDFHVDLDDTVAPRAKSGRARKPIKYLEESDDDLF.

Methionine 1 carries the N-acetylmethionine modification. Serine 4 bears the Phosphoserine mark. Residue lysine 17 forms a Glycyl lysine isopeptide (Lys-Gly) (interchain with G-Cter in SUMO2) linkage. ATP contacts are provided by residues asparagine 90, asparagine 118, and 146 to 148; that span reads SSN. Residues lysine 154 and lysine 155 each participate in a glycyl lysine isopeptide (Lys-Gly) (interchain with G-Cter in SUMO2) cross-link. An ATP-binding site is contributed by 159–166; the sequence is GRNGYGAK. Threonine 280 is subject to Phosphothreonine. Positions 340–342 are interaction with DNA; sequence KKK. A Glycyl lysine isopeptide (Lys-Gly) (interchain with G-Cter in SUMO2) cross-link involves residue lysine 350. 374-376 serves as a coordination point for ATP; that stretch reads QTK. Glycyl lysine isopeptide (Lys-Gly) (interchain with G-Cter in SUMO2) cross-links involve residues lysine 384, lysine 395, lysine 414, lysine 416, lysine 423, and lysine 438. One can recognise a Toprim domain in the interval 453-570; the sequence is CTLILTEGDS…SLLRHRFLEE (118 aa). Residue glutamate 459 participates in Mg(2+) binding. Glycyl lysine isopeptide (Lys-Gly) (interchain with G-Cter in SUMO2) cross-links involve residues lysine 464, lysine 478, and lysine 527. Positions 539 and 541 each coordinate Mg(2+). Glycyl lysine isopeptide (Lys-Gly) (interchain with G-Cter in SUMO2) cross-links involve residues lysine 582, lysine 597, lysine 612, lysine 620, lysine 623, lysine 630, lysine 637, lysine 653, lysine 660, and lysine 674. The Topo IIA-type catalytic domain maps to 713–1168; that stretch reads IPSMVDGLKP…TPSDLWKEDL (456 aa). The active-site O-(5'-phospho-DNA)-tyrosine intermediate is the tyrosine 803. The tract at residues 988 to 997 is interaction with DNA; sequence KLQTSLTCNS. Lysine 1073 participates in a covalent cross-link: Glycyl lysine isopeptide (Lys-Gly) (interchain with G-Cter in SUMO2). Residues 1087-1096 are compositionally biased toward basic and acidic residues; the sequence is AWKEAQQKVP. The segment at 1087-1120 is disordered; that stretch reads AWKEAQQKVPEEEENEENEESESESTSPAAESGP. Over residues 1097-1109 the composition is skewed to acidic residues; the sequence is EEEENEENEESES. Residues lysine 1193 and lysine 1201 each participate in a glycyl lysine isopeptide (Lys-Gly) (interchain with G-Cter in SUMO2) cross-link. Serine 1210 is subject to Phosphoserine. The disordered stretch occupies residues 1229–1526; sequence EKKIRRKIKS…YLEESDDDLF (298 aa). Lysine 1237 is covalently cross-linked (Glycyl lysine isopeptide (Lys-Gly) (interchain with G-Cter in SUMO1); alternate). A Glycyl lysine isopeptide (Lys-Gly) (interchain with G-Cter in SUMO2); alternate cross-link involves residue lysine 1237. Threonine 1244 is modified (phosphothreonine). Over residues 1254 to 1268 the composition is skewed to basic and acidic residues; the sequence is LRQRLEKRQKREPGT. Glycyl lysine isopeptide (Lys-Gly) (interchain with G-Cter in SUMO2) cross-links involve residues lysine 1272, lysine 1279, and lysine 1282. Phosphoserine is present on residues serine 1291, serine 1293, serine 1295, and serine 1298. Threonine 1323 is subject to Phosphothreonine. Positions 1326–1346 are enriched in acidic residues; it reads LDSDDDFSGLDEKDEDEDFFP. Phosphoserine occurs at positions 1328 and 1333. Position 1350 is a phosphothreonine (threonine 1350). Glycyl lysine isopeptide (Lys-Gly) (interchain with G-Cter in SUMO2) cross-links involve residues lysine 1359, lysine 1363, and lysine 1369. A phosphoserine mark is found at serine 1370 and serine 1373. Residue lysine 1381 forms a Glycyl lysine isopeptide (Lys-Gly) (interchain with G-Cter in SUMO2) linkage. Serine 1383 and serine 1387 each carry phosphoserine. Residues 1417–1427 show a composition bias toward polar residues; sequence TKGQSLTSTAG. A Glycyl lysine isopeptide (Lys-Gly) (interchain with G-Cter in SUMO2); alternate cross-link involves residue lysine 1418. The residue at position 1418 (lysine 1418) is an N6-acetyllysine; alternate. Residues 1429-1435 are interaction with PLSCR1; the sequence is KKRAVPK. A Glycyl lysine isopeptide (Lys-Gly) (interchain with G-Cter in SUMO2); alternate cross-link involves residue lysine 1438. Lysine 1438 is subject to N6-acetyllysine; alternate. Glycyl lysine isopeptide (Lys-Gly) (interchain with G-Cter in SUMO2) cross-links involve residues lysine 1450 and lysine 1455. Phosphoserine occurs at positions 1465, 1467, 1470, and 1472. Glycyl lysine isopeptide (Lys-Gly) (interchain with G-Cter in SUMO2) cross-links involve residues lysine 1480 and lysine 1488. Positions 1487 to 1498 are enriched in basic and acidic residues; it reads LKGEERDFHVDL. Phosphoserine is present on serine 1521.

Belongs to the type II topoisomerase family. As to quaternary structure, homodimer. Interacts with COPS5. Interacts with RECQL5; this stimulates DNA decatenation. Interacts with SETMAR; stimulates the topoisomerase activity. Interacts with DHX9; this interaction occurs in a E2 enzyme UBE2I- and RNA-dependent manner, negatively regulates DHX9-mediated double-stranded DNA and RNA duplex helicase activity and stimulates TOP2A-mediated supercoiled DNA relaxation activity. Interacts with HNRNPU (via C-terminus); this interaction protects the topoisomerase TOP2A from degradation and positively regulates the relaxation of supercoiled DNA in a RNA-dependent manner. Interacts with MCM3AP. Interacts with ERCC6. Interacts with PLSCR1. Interacts with GCNA; this interaction allows the resolution of topoisomerase II (TOP2A) DNA-protein cross-links. Interacts with POL1RA/RPA1 (via dock II) and UBTF in the context of Pol I complex; may assist Pol I transcription initiation by releasing supercoils occurring during DNA unwinding. Interacts with TPRN; TPRN interacts with a number of DNA damage response proteins, is recruited to sites of DNA damage and may play a role in DNA damage repair. The cofactor is Mg(2+). Mn(2+) is required as a cofactor. Ca(2+) serves as cofactor. Post-translationally, phosphorylation has no effect on catalytic activity.

Its subcellular location is the cytoplasm. The protein localises to the nucleus. The protein resides in the nucleoplasm. It is found in the nucleolus. It carries out the reaction ATP-dependent breakage, passage and rejoining of double-stranded DNA.. Its function is as follows. Key decatenating enzyme that alters DNA topology by binding to two double-stranded DNA molecules, generating a double-stranded break in one of the strands, passing the intact strand through the broken strand, and religating the broken strand. May play a role in regulating the period length of BMAL1 transcriptional oscillation. The polypeptide is DNA topoisomerase 2-alpha (Top2a) (Rattus norvegicus (Rat)).